Here is a 569-residue protein sequence, read N- to C-terminus: WD repeat-containing protein 20 (569 aa).

An N-acetylalanine modification is found at Ala-2. WD repeat units follow at residues 94–138, 139–210, 211–252, 253–331, 332–426, 427–523, and 524–559; these read RIYK…KETS, KLFN…KSTR, NPLL…FDSV, ELHG…SGSD, EDFQ…NSVP, PPLP…VPLL, and EPLI…CTWG. Phosphoserine is present on residues Ser-357 and Ser-360. Composition is skewed to polar residues over residues 405 to 423 and 431 to 445; these read NATS…TPGN and RSNS…NAGS. The tract at residues 405–445 is disordered; the sequence is NATSPPAGSNGNSVTTPGNSVPPPLPRSNSLPHSAVSNAGS. Residues Ser-432, Ser-434, and Ser-465 each carry the phosphoserine modification. The segment at 450-468 is mediates XPO1-dependent nuclear export of WDR20-USP12 complexes; the sequence is MDGAIASGVSKFATLSLHD.

Interacts with USP12; promotes translocation of USP12/WDR20 to the plasma membrane. Component of the USP12/WDR20/WDR48 deubiquitinating complex. Interacts with USP46; contributes to the cytoplasmic localization of the USP46/WDR20 complex. Component of the USP12/DMWD/WDR48 deubiquitinating complex.

The protein localises to the cytoplasm. It localises to the nucleus. Its function is as follows. Regulator of deubiquitinating complexes. Activates deubiquitinating activity of complexes containing USP12. Anchors at the base of the ubiquitin-contacting loop of USP12 and remotely modulates the catalytic center of the enzyme. Regulates shuttling of the USP12 deubiquitinase complex between the plasma membrane, cytoplasm and nucleus. The protein is WD repeat-containing protein 20 (WDR20) of Homo sapiens (Human).